Consider the following 140-residue polypeptide: Nucleoside diphosphate kinase (140 aa).

Residues K9, F57, R85, T91, R102, and N112 each contribute to the ATP site. H115 acts as the Pros-phosphohistidine intermediate in catalysis.

Belongs to the NDK family. In terms of assembly, homotetramer. Mg(2+) is required as a cofactor.

It is found in the cytoplasm. The enzyme catalyses a 2'-deoxyribonucleoside 5'-diphosphate + ATP = a 2'-deoxyribonucleoside 5'-triphosphate + ADP. The catalysed reaction is a ribonucleoside 5'-diphosphate + ATP = a ribonucleoside 5'-triphosphate + ADP. In terms of biological role, major role in the synthesis of nucleoside triphosphates other than ATP. The ATP gamma phosphate is transferred to the NDP beta phosphate via a ping-pong mechanism, using a phosphorylated active-site intermediate. The chain is Nucleoside diphosphate kinase from Chlorobaculum parvum (strain DSM 263 / NCIMB 8327) (Chlorobium vibrioforme subsp. thiosulfatophilum).